The primary structure comprises 624 residues: Glutamine--fructose-6-phosphate aminotransferase [isomerizing] (624 aa).

C2 serves as the catalytic Nucleophile; for GATase activity. The Glutamine amidotransferase type-2 domain occupies 2–225 (CGIVGYVGRR…QDQAVVITAD (224 aa)). SIS domains follow at residues 297 to 436 (SDQE…ARGT) and 469 to 614 (LAHR…VDKP). The For Fru-6P isomerization activity role is filled by K619.

Homodimer.

It localises to the cytoplasm. The catalysed reaction is D-fructose 6-phosphate + L-glutamine = D-glucosamine 6-phosphate + L-glutamate. Its function is as follows. Catalyzes the first step in hexosamine metabolism, converting fructose-6P into glucosamine-6P using glutamine as a nitrogen source. This Mycobacterium bovis (strain ATCC BAA-935 / AF2122/97) protein is Glutamine--fructose-6-phosphate aminotransferase [isomerizing].